The primary structure comprises 110 residues: Large ribosomal subunit protein uL22 (110 aa).

It belongs to the universal ribosomal protein uL22 family. As to quaternary structure, part of the 50S ribosomal subunit.

In terms of biological role, this protein binds specifically to 23S rRNA; its binding is stimulated by other ribosomal proteins, e.g. L4, L17, and L20. It is important during the early stages of 50S assembly. It makes multiple contacts with different domains of the 23S rRNA in the assembled 50S subunit and ribosome. Its function is as follows. The globular domain of the protein is located near the polypeptide exit tunnel on the outside of the subunit, while an extended beta-hairpin is found that lines the wall of the exit tunnel in the center of the 70S ribosome. This is Large ribosomal subunit protein uL22 from Buchnera aphidicola subsp. Schizaphis graminum (strain Sg).